Consider the following 383-residue polypeptide: Acetylornithine deacetylase (383 aa).

Position 80 (H80) interacts with Zn(2+). D82 is an active-site residue. D112 is a binding site for Zn(2+). E144 is a catalytic residue. E145, E169, and H355 together coordinate Zn(2+).

It belongs to the peptidase M20A family. ArgE subfamily. Homodimer. Zn(2+) is required as a cofactor. It depends on Co(2+) as a cofactor. Requires glutathione as cofactor.

The protein resides in the cytoplasm. It catalyses the reaction N(2)-acetyl-L-ornithine + H2O = L-ornithine + acetate. It functions in the pathway amino-acid biosynthesis; L-arginine biosynthesis; L-ornithine from N(2)-acetyl-L-ornithine (linear): step 1/1. In terms of biological role, catalyzes the hydrolysis of the amide bond of N(2)-acetylated L-amino acids. Cleaves the acetyl group from N-acetyl-L-ornithine to form L-ornithine, an intermediate in L-arginine biosynthesis pathway, and a branchpoint in the synthesis of polyamines. This is Acetylornithine deacetylase from Shigella flexneri serotype 5b (strain 8401).